Reading from the N-terminus, the 631-residue chain is RNA polymerase sigma factor RpoD (631 aa).

The segment at 395-465 (LIKANLRLVV…TRSISDQART (71 aa)) is sigma-70 factor domain-2. Positions 419–422 (DLVQ) match the Interaction with polymerase core subunit RpoC motif. The sigma-70 factor domain-3 stretch occupies residues 474–550 (EQINRLNRET…DKAIKNPANH (77 aa)). The sigma-70 factor domain-4 stretch occupies residues 563 to 616 (ILGTLPEREQEVVKMRFGLEDGYSLTLEEVGLHFNVTRERIRQIESKALRRLKN). Residues 589–608 (LEEVGLHFNVTRERIRQIES) constitute a DNA-binding region (H-T-H motif).

This sequence belongs to the sigma-70 factor family. RpoD/SigA subfamily. As to quaternary structure, interacts transiently with the RNA polymerase catalytic core.

It is found in the cytoplasm. Its function is as follows. Sigma factors are initiation factors that promote the attachment of RNA polymerase to specific initiation sites and are then released. This sigma factor is the primary sigma factor during exponential growth. The polypeptide is RNA polymerase sigma factor RpoD (Borreliella burgdorferi (strain ATCC 35210 / DSM 4680 / CIP 102532 / B31) (Borrelia burgdorferi)).